A 337-amino-acid polypeptide reads, in one-letter code: ATP-dependent 6-phosphofructokinase (337 aa).

Gly11 lines the ATP pocket. ADP is bound at residue 21–25 (RAVVR). Residues 72–73 (RY) and 102–105 (GDGS) each bind ATP. Asp103 lines the Mg(2+) pocket. 125-127 (TID) contributes to the substrate binding site. Asp127 (proton acceptor) is an active-site residue. Position 154 (Arg154) interacts with ADP. Residues Arg162 and 169–171 (MGR) contribute to the substrate site. ADP-binding positions include 185–187 (GAD), Arg212, and 214–216 (KNH). Substrate is bound by residues Glu223, Arg245, and 251–254 (HILR).

It belongs to the phosphofructokinase type A (PFKA) family. ATP-dependent PFK group I subfamily. Prokaryotic clade 'B1' sub-subfamily. In terms of assembly, homotetramer. Mg(2+) serves as cofactor.

It localises to the cytoplasm. The catalysed reaction is beta-D-fructose 6-phosphate + ATP = beta-D-fructose 1,6-bisphosphate + ADP + H(+). Its pathway is carbohydrate degradation; glycolysis; D-glyceraldehyde 3-phosphate and glycerone phosphate from D-glucose: step 3/4. Allosterically activated by ADP and other diphosphonucleosides, and allosterically inhibited by phosphoenolpyruvate. Its function is as follows. Catalyzes the phosphorylation of D-fructose 6-phosphate to fructose 1,6-bisphosphate by ATP, the first committing step of glycolysis. This chain is ATP-dependent 6-phosphofructokinase, found in Streptococcus equi subsp. equi (strain 4047).